A 132-amino-acid polypeptide reads, in one-letter code: Large ribosomal subunit protein bL17 (132 aa).

It belongs to the bacterial ribosomal protein bL17 family. Part of the 50S ribosomal subunit. Contacts protein L32.

The polypeptide is Large ribosomal subunit protein bL17 (Marinobacter nauticus (strain ATCC 700491 / DSM 11845 / VT8) (Marinobacter aquaeolei)).